The sequence spans 686 residues: Cation channel sperm-associated protein 1 (686 aa).

A compositionally biased stretch (basic and acidic residues) spans 1–15 (MDQSSRRDESYHETH). 4 disordered regions span residues 1–57 (MDQS…QQPY), 97–177 (TLPN…NRDH), 207–271 (DHHH…KSTA), and 289–318 (QSRESLRESASLSEGEDHVQKRKKAQRAHK). The Cytoplasmic segment spans residues 1–351 (MDQSSRRDES…QMILSLTQSL (351 aa)). Over residues 25-35 (SHPHPHPHPTL) the composition is skewed to basic residues. Positions 128–142 (DPNHHPHQDDPHRPS) are enriched in basic and acidic residues. The span at 147-160 (HPSSTGSHQGTTHQ) shows a compositional bias: polar residues. Basic residues-rich tracts occupy residues 211–229 (EGHHAHSHHGEHPHHKEQR) and 235–244 (HMHHHIHHRS). A compositionally biased stretch (polar residues) spans 245–271 (PSASQLSHKSHSTLATSPSHVGSKSTA). Residues 308–318 (QKRKKAQRAHK) are compositionally biased toward basic residues. The helical transmembrane segment at 352–373 (GFETFIFIVVCLNTVILVAQTF) threads the bilayer. At 374 to 382 (TELEIRGEW) the chain is on the extracellular side. The chain crosses the membrane as a helical span at residues 383-404 (YFMVLDSIFLSIYVLEAVLKLI). The Cytoplasmic segment spans residues 405-412 (ALGLEYFY). A helical membrane pass occupies residues 413 to 435 (DPWNNLDFFIMVMAVLDFVLLQI). Residues 436–446 (NSLSYSFYNHS) lie on the Extracellular side of the membrane. The chain crosses the membrane as a helical span at residues 447–469 (LFRILKVFKSMRALRAIRVLRRL). Residues 470–487 (SILTSLHEVAGTLSGSLP) lie on the Cytoplasmic side of the membrane. A helical transmembrane segment spans residues 488 to 510 (SITAILTLMFTCLFLFSVVLRAL). The Extracellular portion of the chain corresponds to 511-521 (FQDSDPKRFQN). The segment at residues 522–534 (IFTTLFTLFTMLT) is an intramembrane region (helical; Pore-forming). The Extracellular portion of the chain corresponds to 535–551 (LDDWSLIYIDNRAQGAW). Residues 552–577 (YIIPILMIYIVIQYFIFLNLVIAVLV) form a helical membrane-spanning segment. The Cytoplasmic segment spans residues 578 to 686 (DNFQMALLKG…FEAGDDDYGK (109 aa)).

This sequence belongs to the cation channel sperm-associated (TC 1.A.1.19) family. In terms of assembly, component of the CatSper complex or CatSpermasome composed of the core pore-forming members CATSPER1, CATSPER2, CATSPER3 and CATSPER4 as well as auxiliary members CATSPERB, CATSPERG2, CATSPERD, CATSPERE, CATSPERZ, C2CD6/CATSPERT, SLCO6C1, TMEM249, TMEM262 and EFCAB9. HSPA1 may be an additional auxiliary complex member. The core complex members CATSPER1, CATSPER2, CATSPER3 and CATSPER4 form a heterotetrameric channel. The auxiliary CATSPERB, CATSPERG2, CATSPERD and CATSPERE subunits form a pavilion-like structure over the pore which stabilizes the complex through interactions with CATSPER4, CATSPER3, CATSPER1 and CATSPER2 respectively. SLCO6C1 interacts with CATSPERE, and TMEM262/CATSPERH interacts with CATSPERB, further stabilizing the complex. C2CD6/CATSPERT interacts at least with CATSPERD and is required for targeting the CatSper complex in the flagellar membrane. Interacts with Ca(v)3.3/CACNA1I, leading to suppression of T-type calcium channel activity. In terms of tissue distribution, testis-specific.

Its subcellular location is the cell projection. It is found in the cilium. The protein resides in the flagellum membrane. It catalyses the reaction Ca(2+)(in) = Ca(2+)(out). With respect to regulation, activated by intracellular alkalinization. In contrast to the human ortholog, not activated by progesterone. Pore-forming subunit of the CatSper complex, a sperm-specific voltage-gated calcium channel that plays a central role in sperm cell hyperactivation. Controls calcium entry to mediate the hyperactivated motility, a step needed for sperm motility which is essential late in the preparation of sperm for fertilization. The protein is Cation channel sperm-associated protein 1 (Catsper1) of Mus musculus (Mouse).